The sequence spans 248 residues: 1-(5-phosphoribosyl)-5-[(5-phosphoribosylamino)methylideneamino] imidazole-4-carboxamide isomerase (248 aa).

The Proton acceptor role is filled by Asp-8. Residue Asp-129 is the Proton donor of the active site.

Belongs to the HisA/HisF family.

The protein localises to the cytoplasm. It carries out the reaction 1-(5-phospho-beta-D-ribosyl)-5-[(5-phospho-beta-D-ribosylamino)methylideneamino]imidazole-4-carboxamide = 5-[(5-phospho-1-deoxy-D-ribulos-1-ylimino)methylamino]-1-(5-phospho-beta-D-ribosyl)imidazole-4-carboxamide. It functions in the pathway amino-acid biosynthesis; L-histidine biosynthesis; L-histidine from 5-phospho-alpha-D-ribose 1-diphosphate: step 4/9. This Rhizobium leguminosarum bv. trifolii (strain WSM2304) protein is 1-(5-phosphoribosyl)-5-[(5-phosphoribosylamino)methylideneamino] imidazole-4-carboxamide isomerase.